A 207-amino-acid chain; its full sequence is Casparian strip membrane protein 3 (207 aa).

Residues 1 to 45 are Cytoplasmic-facing; it reads MDSTKSTEETAINIPRESSSTKHKIAVAAVKAVATPHKRGGMKRG. The helical transmembrane segment at 46 to 66 threads the bilayer; it reads VAIFDFILRICALAAALAATA. The Extracellular segment spans residues 67–95; sequence TMGTTDQTLPFFTQFFQFQASYDDLPTFT. Residues 96 to 116 traverse the membrane as a helical segment; the sequence is FFVIANAIASGYLVLSLPFSI. The Cytoplasmic segment spans residues 117 to 128; the sequence is VAIVRPHVTGVK. A helical membrane pass occupies residues 129 to 149; that stretch reads LLLLILDTVLVAFTTAAAASA. Topologically, residues 150-181 are extracellular; that stretch reads AAIVYLAHNGNSNTNWFAICQQFNDFCQRTSG. The helical transmembrane segment at 182-202 threads the bilayer; that stretch reads AVVASFIAAAIFIFLVVLSAV. The Cytoplasmic segment spans residues 203–207; sequence ALRRH.

Belongs to the Casparian strip membrane proteins (CASP) family. As to quaternary structure, homodimer and heterodimers.

It localises to the cell membrane. Its function is as follows. Regulates membrane-cell wall junctions and localized cell wall deposition. Required for establishment of the Casparian strip membrane domain (CSD) and the subsequent formation of Casparian strips, a cell wall modification of the root endodermis that determines an apoplastic barrier between the intraorganismal apoplasm and the extraorganismal apoplasm and prevents lateral diffusion. The protein is Casparian strip membrane protein 3 of Erythranthe guttata (Yellow monkey flower).